Here is a 439-residue protein sequence, read N- to C-terminus: Lipid-A-disaccharide synthase (439 aa).

Residues 1–35 (MKEIGNRESGIVDGQRNGASVGSDPTALPIPHSPL) are disordered.

The protein belongs to the LpxB family.

The catalysed reaction is a lipid X + a UDP-2-N,3-O-bis[(3R)-3-hydroxyacyl]-alpha-D-glucosamine = a lipid A disaccharide + UDP + H(+). The protein operates within bacterial outer membrane biogenesis; LPS lipid A biosynthesis. Condensation of UDP-2,3-diacylglucosamine and 2,3-diacylglucosamine-1-phosphate to form lipid A disaccharide, a precursor of lipid A, a phosphorylated glycolipid that anchors the lipopolysaccharide to the outer membrane of the cell. The chain is Lipid-A-disaccharide synthase from Xanthomonas euvesicatoria pv. vesicatoria (strain 85-10) (Xanthomonas campestris pv. vesicatoria).